The primary structure comprises 209 residues: MSIGILGTKLGMTQIFDEAGNAIPVTIIQAGPCPITQIKTTATDGYNAIQVGYRETKEKNLTKAQLGHLQKTNNSALRVLQEFSIESSDSIEVEKPITVELFNDNDIVNIQGYSIGRGFSGYQKRHNFARGPMSHGSKNHRLPGSIGAGSTPGRVYPGTRMAGRKGDSKITIRGLKIVKVDSERSLLIVKGSVPGKPGGLLTITQVKKV.

Residues 132–154 (PMSHGSKNHRLPGSIGAGSTPGR) form a disordered region.

The protein belongs to the universal ribosomal protein uL3 family. As to quaternary structure, part of the 50S ribosomal subunit.

The protein localises to the plastid. It is found in the cyanelle. Its function is as follows. One of the primary rRNA binding proteins, it binds directly near the 3'-end of the 23S rRNA, where it nucleates assembly of the 50S subunit. This is Large ribosomal subunit protein uL3c (rpl3) from Cyanophora paradoxa.